Consider the following 107-residue polypeptide: Phosphoribosyl-ATP pyrophosphatase (107 aa).

This sequence belongs to the PRA-PH family.

It is found in the cytoplasm. It catalyses the reaction 1-(5-phospho-beta-D-ribosyl)-ATP + H2O = 1-(5-phospho-beta-D-ribosyl)-5'-AMP + diphosphate + H(+). Its pathway is amino-acid biosynthesis; L-histidine biosynthesis; L-histidine from 5-phospho-alpha-D-ribose 1-diphosphate: step 2/9. This Mesorhizobium japonicum (strain LMG 29417 / CECT 9101 / MAFF 303099) (Mesorhizobium loti (strain MAFF 303099)) protein is Phosphoribosyl-ATP pyrophosphatase (hisE).